The following is a 268-amino-acid chain: Nickel import ATP-binding protein NikE (268 aa).

An ABC transporter domain is found at 4–252 (LNVSGLSHHY…SSDAGRVLQN (249 aa)). 45–52 (GRSGCGKS) serves as a coordination point for ATP.

It belongs to the ABC transporter superfamily. Nickel importer (TC 3.A.1.5.3) family. As to quaternary structure, the complex is composed of two ATP-binding proteins (NikD and NikE), two transmembrane proteins (NikB and NikC) and a solute-binding protein (NikA).

Its subcellular location is the cell inner membrane. It catalyses the reaction Ni(2+)(out) + ATP + H2O = Ni(2+)(in) + ADP + phosphate + H(+). Functionally, part of the ABC transporter complex NikABCDE involved in nickel import. Responsible for energy coupling to the transport system. The polypeptide is Nickel import ATP-binding protein NikE (Shigella sonnei (strain Ss046)).